The primary structure comprises 327 residues: Nuclear apoptosis-inducing factor 1 (327 aa).

Residues 1-70 are required for nuclear localization and apoptosis-inducing activity; sequence MAVPAKKRKM…CRRELPEVKK (70 aa). The segment covering 88–98 has biased composition (low complexity); the sequence is AAVEGGEAPGP. 2 disordered regions span residues 88–118 and 303–327; these read AAVE…AGGP and NMPN…SIIQ. Over residues 104–117 the composition is skewed to gly residues; that stretch reads AGGPGTGGGSGAGG. Over residues 316–327 the composition is skewed to polar residues; sequence VAQNGQPDSIIQ.

This sequence belongs to the NAIF1 family. As to quaternary structure, interacts with HARBI1.

The protein resides in the nucleus. Functionally, induces apoptosis. The chain is Nuclear apoptosis-inducing factor 1 (NAIF1) from Bos taurus (Bovine).